The following is a 159-amino-acid chain: uncharacterized protein (159 aa).

One can recognise an N-acetyltransferase domain in the interval 1–139; the sequence is MNIIPTCQVP…TARKMKPEIP (139 aa).

This is an uncharacterized protein from Bacillus subtilis (strain 168).